The chain runs to 361 residues: Alanine racemase 2 (361 aa).

K30 (proton acceptor; specific for D-alanine) is an active-site residue. An N6-(pyridoxal phosphate)lysine modification is found at K30. R122 contributes to the substrate binding site. Y256 acts as the Proton acceptor; specific for L-alanine in catalysis. Substrate is bound at residue M303.

Belongs to the alanine racemase family. Requires pyridoxal 5'-phosphate as cofactor.

It carries out the reaction L-alanine = D-alanine. The protein operates within amino-acid biosynthesis; D-alanine biosynthesis; D-alanine from L-alanine: step 1/1. Its function is as follows. Catalyzes the interconversion of L-alanine and D-alanine. May also act on other amino acids. The polypeptide is Alanine racemase 2 (alr2) (Staphylococcus aureus (strain COL)).